The primary structure comprises 929 residues: Bifunctional glutamine synthetase adenylyltransferase/adenylyl-removing enzyme (929 aa).

The segment at 1–422 is adenylyl removase; it reads MTTPISTSRA…TRHFEQIFAV (422 aa). Residues 429 to 929 are adenylyl transferase; sequence LGTFARIRPE…FQLWEDVFGT (501 aa).

The protein belongs to the GlnE family. Mg(2+) is required as a cofactor.

It catalyses the reaction [glutamine synthetase]-O(4)-(5'-adenylyl)-L-tyrosine + phosphate = [glutamine synthetase]-L-tyrosine + ADP. The catalysed reaction is [glutamine synthetase]-L-tyrosine + ATP = [glutamine synthetase]-O(4)-(5'-adenylyl)-L-tyrosine + diphosphate. Its function is as follows. Involved in the regulation of glutamine synthetase GlnA, a key enzyme in the process to assimilate ammonia. When cellular nitrogen levels are high, the C-terminal adenylyl transferase (AT) inactivates GlnA by covalent transfer of an adenylyl group from ATP to specific tyrosine residue of GlnA, thus reducing its activity. Conversely, when nitrogen levels are low, the N-terminal adenylyl removase (AR) activates GlnA by removing the adenylyl group by phosphorolysis, increasing its activity. The regulatory region of GlnE binds the signal transduction protein PII (GlnB) which indicates the nitrogen status of the cell. The chain is Bifunctional glutamine synthetase adenylyltransferase/adenylyl-removing enzyme from Nitrosomonas eutropha (strain DSM 101675 / C91 / Nm57).